The sequence spans 657 residues: Probable potassium transport system protein Kup (657 aa).

Transmembrane regions (helical) follow at residues 15 to 35, 48 to 68, 100 to 120, 147 to 167, 173 to 193, 219 to 239, 251 to 271, 292 to 312, 348 to 368, 378 to 398, 403 to 423, and 431 to 451; these read SFLI…LYVM, ITPD…TLLT, WLII…MLTP, IIII…HFGT, IFGP…IVNL, LGFF…ALYS, LTWP…AAWI, MMPS…AIIA, IYMP…VLYF, YGLS…NYLL, PLPI…SFLI, and KGGF…YIWI.

The protein belongs to the HAK/KUP transporter (TC 2.A.72) family.

It localises to the cell membrane. The catalysed reaction is K(+)(in) + H(+)(in) = K(+)(out) + H(+)(out). Functionally, transport of potassium into the cell. Likely operates as a K(+):H(+) symporter. In Clostridium perfringens (strain SM101 / Type A), this protein is Probable potassium transport system protein Kup.